The sequence spans 306 residues: IN2-2 protein (306 aa).

Catalysis depends on tyrosine 64, which acts as the Proton donor. Histidine 131 provides a ligand contact to substrate. 210-220 contacts NADP(+); that stretch reads SPLGRGFFSSG. Positions 272–306 are disordered; the sequence is LGSPPRKRRLPHTWHNKNRQLQPERGGTVCEAYTG. Residues 276-289 show a composition bias toward basic residues; sequence PRKRRLPHTWHNKN.

Belongs to the aldo/keto reductase family. Aldo/keto reductase 2 subfamily. In terms of tissue distribution, leaves and roots.

In Zea mays (Maize), this protein is IN2-2 protein (IN2-2).